The primary structure comprises 455 residues: Ribulose bisphosphate carboxylase large chain (455 aa).

Lysine 5 bears the N6,N6,N6-trimethyllysine mark. The substrate site is built by asparagine 114 and threonine 164. Lysine 166 serves as the catalytic Proton acceptor. Residue lysine 168 coordinates substrate. Residues lysine 192, aspartate 194, and glutamate 195 each contribute to the Mg(2+) site. Lysine 192 bears the N6-carboxylysine mark. The Proton acceptor role is filled by histidine 285. Positions 286, 318, and 370 each coordinate substrate.

It belongs to the RuBisCO large chain family. Type I subfamily. As to quaternary structure, heterohexadecamer of 8 large chains and 8 small chains; disulfide-linked. The disulfide link is formed within the large subunit homodimers. Mg(2+) is required as a cofactor. Post-translationally, the disulfide bond which can form in the large chain dimeric partners within the hexadecamer appears to be associated with oxidative stress and protein turnover.

It is found in the plastid. It localises to the chloroplast. It catalyses the reaction 2 (2R)-3-phosphoglycerate + 2 H(+) = D-ribulose 1,5-bisphosphate + CO2 + H2O. The enzyme catalyses D-ribulose 1,5-bisphosphate + O2 = 2-phosphoglycolate + (2R)-3-phosphoglycerate + 2 H(+). Functionally, ruBisCO catalyzes two reactions: the carboxylation of D-ribulose 1,5-bisphosphate, the primary event in carbon dioxide fixation, as well as the oxidative fragmentation of the pentose substrate in the photorespiration process. Both reactions occur simultaneously and in competition at the same active site. This chain is Ribulose bisphosphate carboxylase large chain, found in Vachellia farnesiana (Sweet acacia).